A 310-amino-acid chain; its full sequence is Adenylyl-sulfate kinase 4, chloroplastic (310 aa).

Residues 1 to 75 (MDVAAMARCV…MAKDESISSR (75 aa)) constitute a chloroplast transit peptide. 116 to 124 (GLSGSGKSS) lines the ATP pocket. Substrate-binding positions include Asp146, Arg149, Arg163, Asn166, 189 to 190 (IS), and Gly239. Catalysis depends on Ser190, which acts as the Phosphoserine intermediate.

It belongs to the APS kinase family. Homodimer; disulfide-linked. In terms of tissue distribution, expressed in root vasculature, root tips, leaf epidermal and guard cells, pollen grains and radicle of immature seeds.

It localises to the plastid. Its subcellular location is the chloroplast. It catalyses the reaction adenosine 5'-phosphosulfate + ATP = 3'-phosphoadenylyl sulfate + ADP + H(+). The protein operates within sulfur metabolism; hydrogen sulfide biosynthesis; sulfite from sulfate: step 2/3. In terms of biological role, catalyzes the phosphorylation of adenosine 5'-phosphosulfate to 3'-phosphoadenylyl sulfate, which is the activated sulfate form for sulfation reactions. Essential for plant reproduction and viability. The polypeptide is Adenylyl-sulfate kinase 4, chloroplastic (APK4) (Arabidopsis thaliana (Mouse-ear cress)).